We begin with the raw amino-acid sequence, 302 residues long: Polyamine aminopropyltransferase (302 aa).

Residues 4–239 (WTWHLEWQTP…GLWGFIYASD (236 aa)) enclose the PABS domain. Gln-33 provides a ligand contact to S-methyl-5'-thioadenosine. Residues His-64 and Glu-88 each coordinate spermidine. S-methyl-5'-thioadenosine-binding positions include Asp-108 and 140–141 (DG). The active-site Proton acceptor is the Asp-158. Pro-167 serves as a coordination point for S-methyl-5'-thioadenosine.

The protein belongs to the spermidine/spermine synthase family. In terms of assembly, homodimer or homotetramer.

The protein resides in the cytoplasm. It carries out the reaction S-adenosyl 3-(methylsulfanyl)propylamine + putrescine = S-methyl-5'-thioadenosine + spermidine + H(+). Its pathway is amine and polyamine biosynthesis; spermidine biosynthesis; spermidine from putrescine: step 1/1. Catalyzes the irreversible transfer of a propylamine group from the amino donor S-adenosylmethioninamine (decarboxy-AdoMet) to putrescine (1,4-diaminobutane) to yield spermidine. The protein is Polyamine aminopropyltransferase of Sulfolobus acidocaldarius (strain ATCC 33909 / DSM 639 / JCM 8929 / NBRC 15157 / NCIMB 11770).